Here is a 57-residue protein sequence, read N- to C-terminus: Granulin-2 (57 aa).

2 disulfide bridges follow: Cys-4/Cys-16 and Cys-10/Cys-26.

It belongs to the granulin family. Granulins are disulfide bridged. As to expression, ubiquitous.

It is found in the secreted. Functionally, granulins have possible cytokine-like activity. They may play a role in inflammation, wound repair, and tissue remodeling. The protein is Granulin-2 of Cyprinus carpio (Common carp).